The following is a 210-amino-acid chain: Histone H1A (210 aa).

2 disordered regions span residues 1–49 and 101–210; these read MAEA…VSEQ and KGSG…PKKK. Composition is skewed to low complexity over residues 26-45 and 129-142; these read KKAA…SGPS and PLAA…AAAK. The H15 domain occupies 42-113; the sequence is SGPSVSEQIV…GASGSFKLNK (72 aa). Basic residues-rich tracts occupy residues 143–153 and 160–180; these read KTAKSPKKPKK and SPKK…KTAV. The span at 181 to 192 shows a compositional bias: low complexity; the sequence is KPKVAAKSPAKA. Basic residues predominate over residues 193–210; it reads KAAKPKVAKAKKAAPKKK.

This sequence belongs to the histone H1/H5 family.

The protein localises to the nucleus. It is found in the chromosome. In terms of biological role, histones H1 are necessary for the condensation of nucleosome chains into higher-order structures. This chain is Histone H1A, found in Xenopus laevis (African clawed frog).